The following is a 200-amino-acid chain: NAD(P)H-dependent FMN reductase C4B3.06c (200 aa).

FMN is bound by residues arginine 22, 96–99, and tyrosine 126; that span reads QYNG.

As to quaternary structure, homodimer.

It is found in the cytoplasm. It localises to the nucleus. It catalyses the reaction FMNH2 + NADP(+) = FMN + NADPH + 2 H(+). The enzyme catalyses FMNH2 + NAD(+) = FMN + NADH + 2 H(+). Functionally, has several reductase activities that are NAD(P)H-dependent and involve FMN as a cofactor. May be involved in ferric iron assimilation. In Schizosaccharomyces pombe (strain 972 / ATCC 24843) (Fission yeast), this protein is NAD(P)H-dependent FMN reductase C4B3.06c.